The chain runs to 816 residues: Chitin synthase 1 (816 aa).

The segment at 1–21 (MLSQGEILRNPSRTRLQRPPK) is disordered. The Cytoplasmic segment spans residues 1-32 (MLSQGEILRNPSRTRLQRPPKSRSERKGWWYR). The chain crosses the membrane as a helical span at residues 33 to 53 (VTIFLTCLIPNFMLRCFGMTT). Over 54–63 (PEVQHAWREK) the chain is Extracellular. A helical membrane pass occupies residues 64–84 (VALCICIFFCWIILGFTTYGM). Residues 85 to 240 (NTIICKGSNQ…TPGCLLADTM (156 aa)) are Cytoplasmic-facing. The chain crosses the membrane as a helical span at residues 241 to 261 (FWITTISIFGLIITKFLLGFF). At 262–697 (YSWYAKRRPK…QLVVVMELFG (436 aa)) the chain is on the extracellular side. Residues asparagine 319 and asparagine 664 are each glycosylated (N-linked (GlcNAc...) asparagine). The helical transmembrane segment at 698–718 (TLVLPAAIIFTFVMIAVSILI) threads the bilayer. The Cytoplasmic segment spans residues 719–720 (EP). A helical transmembrane segment spans residues 721-741 (AWVPLIMLVGIFGLPAVLILI). Topologically, residues 742-745 (TTME) are extracellular. Residues 746–766 (IQYVFWCLVYILSIPIWNFVL) form a helical membrane-spanning segment. Topologically, residues 767-816 (PTYAFWHFDNFSWGDTRKVDGEGKEDEEGEFDHTKIRIRELEEFLSEANK) are cytoplasmic.

The protein belongs to the chitin synthase family. Class IV subfamily.

The protein resides in the cell membrane. It catalyses the reaction [(1-&gt;4)-N-acetyl-beta-D-glucosaminyl](n) + UDP-N-acetyl-alpha-D-glucosamine = [(1-&gt;4)-N-acetyl-beta-D-glucosaminyl](n+1) + UDP + H(+). Functionally, polymerizes chitin, a structural polymer of the cell wall and septum, by transferring the sugar moiety of UDP-GlcNAc to the non-reducing end of the growing chitin polymer. In Encephalitozoon cuniculi (strain GB-M1) (Microsporidian parasite), this protein is Chitin synthase 1 (CHS1).